Consider the following 870-residue polypeptide: Lon protease (870 aa).

A Lon N-terminal domain is found at 1–270 (MPTNSYRFLV…KLYEHIHTFA (270 aa)). An ATP-binding site is contributed by 454 to 461 (GPPGTGKT). Residues 691 to 870 (SPQIGTVTGL…YQQIYDFIFK (180 aa)) enclose the Lon proteolytic domain. Catalysis depends on residues S777 and K820.

It belongs to the peptidase S16 family. Homohexamer. Organized in a ring with a central cavity.

It is found in the cytoplasm. It catalyses the reaction Hydrolysis of proteins in presence of ATP.. In terms of biological role, ATP-dependent serine protease that mediates the selective degradation of mutant and abnormal proteins as well as certain short-lived regulatory proteins. Required for cellular homeostasis and for survival from DNA damage and developmental changes induced by stress. Degrades polypeptides processively to yield small peptide fragments that are 5 to 10 amino acids long. Binds to DNA in a double-stranded, site-specific manner. This chain is Lon protease, found in Mesomycoplasma hyopneumoniae (strain 232) (Mycoplasma hyopneumoniae).